We begin with the raw amino-acid sequence, 502 residues long: Cytochrome P450 3A40 (502 aa).

Cys-443 contacts heme.

This sequence belongs to the cytochrome P450 family. Heme serves as cofactor.

The protein resides in the endoplasmic reticulum membrane. It localises to the microsome membrane. It carries out the reaction an organic molecule + reduced [NADPH--hemoprotein reductase] + O2 = an alcohol + oxidized [NADPH--hemoprotein reductase] + H2O + H(+). The chain is Cytochrome P450 3A40 (cyp3a40) from Oryzias latipes (Japanese rice fish).